The primary structure comprises 221 residues: Very-long-chain (3R)-3-hydroxyacyl-CoA dehydratase PASTICCINO 2A (221 aa).

At 1 to 11 (MAGVGSAVRRL) the chain is on the cytoplasmic side. Residues 12-32 (YLSVYNWAVFFGWAQVLYYAV) traverse the membrane as a helical segment. The Lumenal portion of the chain corresponds to 33 to 51 (TTLLESGHEAVYAAVERPL). The chain crosses the membrane as a helical span at residues 52-70 (QFAQTAAFLEILHGLVGLV). Residues 71–76 (RSPVSA) lie on the Cytoplasmic side of the membrane. Residues 77–95 (TLPQIGSRLFLTWGILWSF) form a helical membrane-spanning segment. The Lumenal portion of the chain corresponds to 96–100 (PETHS). Residues 101–121 (HILVTSLVISWSITEIIRYSF) form a helical membrane-spanning segment. Residues 122–141 (FGMKEAFGFAPSWLLWLRYS) are Cytoplasmic-facing. The chain crosses the membrane as a helical span at residues 142-165 (TFMVLYPTGISSEVGLIYIALPYM). Active-site residues include tyrosine 147 and glutamate 154. At 166–184 (KASEKYCLRMPNKWNFSFD) the chain is on the lumenal side. The helical transmembrane segment at 185-209 (FFYASILSLAIYVPGSPHMFTYMLA) threads the bilayer. Residues 210 to 221 (QRKKALAKAKAA) are Cytoplasmic-facing.

Belongs to the very long-chain fatty acids dehydratase HACD family.

Its subcellular location is the endoplasmic reticulum membrane. The enzyme catalyses a very-long-chain (3R)-3-hydroxyacyl-CoA = a very-long-chain (2E)-enoyl-CoA + H2O. It participates in lipid metabolism; fatty acid biosynthesis. Catalyzes the third of the four reactions of the long-chain fatty acids elongation cycle. This endoplasmic reticulum-bound enzymatic process, allows the addition of two carbons to the chain of long- and very long-chain fatty acids/VLCFAs per cycle. This enzyme catalyzes the dehydration of the 3-hydroxyacyl-CoA intermediate into trans-2,3-enoyl-CoA, within each cycle of fatty acid elongation. Thereby, it participates in the production of VLCFAs of different chain lengths that are involved in multiple biological processes as precursors of membrane lipids and lipid mediators. May be an anti-phosphatase that prevents CDKA-1 dephosphorylation and activation. Involved in the hormonal control of cell division and differentiation. Required for proliferation control of meristematic and non-meristematic cells. Negative regulator of the cell cycle. The chain is Very-long-chain (3R)-3-hydroxyacyl-CoA dehydratase PASTICCINO 2A (PAS2A) from Oryza sativa subsp. japonica (Rice).